We begin with the raw amino-acid sequence, 324 residues long: Holliday junction branch migration complex subunit RuvB (324 aa).

A large ATPase domain (RuvB-L) region spans residues 1-180 (MKSISCGKEY…FGIPLHLEFY (180 aa)). Residues Ile-19, Arg-20, Gly-61, Lys-64, Thr-65, Thr-66, 127-129 (EDF), Arg-170, Tyr-180, and Arg-217 each bind ATP. Thr-65 contributes to the Mg(2+) binding site. The tract at residues 181-251 (SFEELVNIIK…VADSVLLKLG (71 aa)) is small ATPAse domain (RuvB-S). The tract at residues 254-324 (KMGLNKLDMN…TDQAKEYLSL (71 aa)) is head domain (RuvB-H). DNA contacts are provided by Arg-307 and Arg-312.

The protein belongs to the RuvB family. In terms of assembly, homohexamer. Forms an RuvA(8)-RuvB(12)-Holliday junction (HJ) complex. HJ DNA is sandwiched between 2 RuvA tetramers; dsDNA enters through RuvA and exits via RuvB. An RuvB hexamer assembles on each DNA strand where it exits the tetramer. Each RuvB hexamer is contacted by two RuvA subunits (via domain III) on 2 adjacent RuvB subunits; this complex drives branch migration. In the full resolvosome a probable DNA-RuvA(4)-RuvB(12)-RuvC(2) complex forms which resolves the HJ.

The protein localises to the cytoplasm. The enzyme catalyses ATP + H2O = ADP + phosphate + H(+). Functionally, the RuvA-RuvB-RuvC complex processes Holliday junction (HJ) DNA during genetic recombination and DNA repair, while the RuvA-RuvB complex plays an important role in the rescue of blocked DNA replication forks via replication fork reversal (RFR). RuvA specifically binds to HJ cruciform DNA, conferring on it an open structure. The RuvB hexamer acts as an ATP-dependent pump, pulling dsDNA into and through the RuvAB complex. RuvB forms 2 homohexamers on either side of HJ DNA bound by 1 or 2 RuvA tetramers; 4 subunits per hexamer contact DNA at a time. Coordinated motions by a converter formed by DNA-disengaged RuvB subunits stimulates ATP hydrolysis and nucleotide exchange. Immobilization of the converter enables RuvB to convert the ATP-contained energy into a lever motion, pulling 2 nucleotides of DNA out of the RuvA tetramer per ATP hydrolyzed, thus driving DNA branch migration. The RuvB motors rotate together with the DNA substrate, which together with the progressing nucleotide cycle form the mechanistic basis for DNA recombination by continuous HJ branch migration. Branch migration allows RuvC to scan DNA until it finds its consensus sequence, where it cleaves and resolves cruciform DNA. The polypeptide is Holliday junction branch migration complex subunit RuvB (Wolbachia sp. subsp. Drosophila simulans (strain wRi)).